A 361-amino-acid polypeptide reads, in one-letter code: D-alanine--D-alanine ligase (361 aa).

Positions 134-344 constitute an ATP-grasp domain; sequence KLLLKSFDIP…FKDLVDNLID (211 aa). Position 167–222 (167–222) interacts with ATP; sequence KEVLGYPVIVKPAVLGSSIGINVAYSENQIESFIKEALKYDLTIVIEKFIEAREIE. Mg(2+) is bound by residues Asp-297, Glu-311, and Asn-313.

This sequence belongs to the D-alanine--D-alanine ligase family. Requires Mg(2+) as cofactor. Mn(2+) is required as a cofactor.

Its subcellular location is the cytoplasm. The catalysed reaction is 2 D-alanine + ATP = D-alanyl-D-alanine + ADP + phosphate + H(+). It functions in the pathway cell wall biogenesis; peptidoglycan biosynthesis. Cell wall formation. This Borreliella burgdorferi (strain ATCC 35210 / DSM 4680 / CIP 102532 / B31) (Borrelia burgdorferi) protein is D-alanine--D-alanine ligase.